A 156-amino-acid chain; its full sequence is Endoribonuclease YbeY (156 aa).

His-122, His-126, and His-132 together coordinate Zn(2+).

Belongs to the endoribonuclease YbeY family. It depends on Zn(2+) as a cofactor.

Its subcellular location is the cytoplasm. Functionally, single strand-specific metallo-endoribonuclease involved in late-stage 70S ribosome quality control and in maturation of the 3' terminus of the 16S rRNA. In Pediococcus pentosaceus (strain ATCC 25745 / CCUG 21536 / LMG 10740 / 183-1w), this protein is Endoribonuclease YbeY.